Consider the following 488-residue polypeptide: Inosine-5'-monophosphate dehydrogenase (488 aa).

2 CBS domains span residues 95–153 and 157–216; these read VISN…SIKI and MTQE…AKDE. Residues aspartate 250 and 300–302 contribute to the NAD(+) site; that span reads GIG. Residues glycine 302 and glycine 304 each coordinate K(+). Serine 305 contacts IMP. K(+) is bound at residue cysteine 307. The active-site Thioimidate intermediate is the cysteine 307. Residues 340–342, 363–364, and 387–391 each bind IMP; these read DGG, GS, and YRGMG. The active-site Proton acceptor is the arginine 403. Glutamate 417 is an IMP binding site. The segment at 468–488 is disordered; sequence GLAESHPHNIQITKESPNYSF. The K(+) site is built by glutamate 471, serine 472, and histidine 473. A compositionally biased stretch (polar residues) spans 475 to 488; sequence HNIQITKESPNYSF.

It belongs to the IMPDH/GMPR family. As to quaternary structure, homotetramer. It depends on K(+) as a cofactor.

It catalyses the reaction IMP + NAD(+) + H2O = XMP + NADH + H(+). The protein operates within purine metabolism; XMP biosynthesis via de novo pathway; XMP from IMP: step 1/1. Mycophenolic acid (MPA) is a non-competitive inhibitor that prevents formation of the closed enzyme conformation by binding to the same site as the amobile flap. In contrast, mizoribine monophosphate (MZP) is a competitive inhibitor that induces the closed conformation. MPA is a potent inhibitor of mammalian IMPDHs but a poor inhibitor of the bacterial enzymes. MZP is a more potent inhibitor of bacterial IMPDH. Functionally, catalyzes the conversion of inosine 5'-phosphate (IMP) to xanthosine 5'-phosphate (XMP), the first committed and rate-limiting step in the de novo synthesis of guanine nucleotides, and therefore plays an important role in the regulation of cell growth. The sequence is that of Inosine-5'-monophosphate dehydrogenase from Staphylococcus aureus (strain Mu50 / ATCC 700699).